We begin with the raw amino-acid sequence, 720 residues long: DNA gyrase subunit B (720 aa).

Residues 1–26 are compositionally biased toward low complexity; it reads MVDAMPENPAEEPTAASAAPNPEAVP. The interval 1 to 42 is disordered; sequence MVDAMPENPAEEPTAASAAPNPEAVPDAVGQPEAPVKDRKVP. The Toprim domain occupies 498-612; the sequence is CEVYIVEGDS…AGHVFLAQPP (115 aa). Glu-504, Asp-577, and Asp-579 together coordinate Mg(2+).

It belongs to the type II topoisomerase GyrB family. Heterotetramer, composed of two GyrA and two GyrB chains. In the heterotetramer, GyrA contains the active site tyrosine that forms a transient covalent intermediate with the DNA, while GyrB binds cofactors and catalyzes ATP hydrolysis. The cofactor is Mg(2+). Requires Mn(2+) as cofactor. Ca(2+) serves as cofactor.

It is found in the cytoplasm. It carries out the reaction ATP-dependent breakage, passage and rejoining of double-stranded DNA.. Its activity is regulated as follows. Supercoiling activity inhibited by novobiocin and coumermycin, DNA wrapping around gyrase is not inhibited. In terms of biological role, a type II topoisomerase that negatively supercoils DNA in an ATP-dependent manner. About 140 bp of DNA wraps around gyrase in the presence or absence of ATP, when ATP is added negative supercoils are made. A type II topoisomerase that negatively supercoils closed circular double-stranded (ds) DNA in an ATP-dependent manner to modulate DNA topology and maintain chromosomes in an underwound state. Negative supercoiling favors strand separation, and DNA replication, transcription, recombination and repair, all of which involve strand separation. Also able to catalyze the interconversion of other topological isomers of dsDNA rings, including catenanes and knotted rings. Type II topoisomerases break and join 2 DNA strands simultaneously in an ATP-dependent manner. The polypeptide is DNA gyrase subunit B (Micrococcus luteus (strain ATCC 4698 / DSM 20030 / JCM 1464 / CCM 169 / CCUG 5858 / IAM 1056 / NBRC 3333 / NCIMB 9278 / NCTC 2665 / VKM Ac-2230) (Micrococcus lysodeikticus)).